An 869-amino-acid polypeptide reads, in one-letter code: Ribonucleoside-diphosphate reductase large chain 2 (869 aa).

The 92-residue stretch at Met1–Lys92 folds into the ATP-cone domain. Residues Lys5 to Arg6, Glu11 to Lys17, Thr53, and Asp57 contribute to the ATP site. Ser202 and Ser217 together coordinate GDP. Cysteines 218 and 443 form a disulfide. DTTP contacts are provided by residues Asp226–Ile228, Lys243, Arg256, and Ala263–Gly264. Phosphoserine is present on Ser227. Lys387 participates in a covalent cross-link: Glycyl lysine isopeptide (Lys-Gly) (interchain with G-Cter in ubiquitin). Asn426 lines the GDP pocket. The active-site Proton acceptor is the Asn426. Cys428 (cysteine radical intermediate) is an active-site residue. GDP contacts are provided by residues Glu430 and Thr608–Thr611. The Proton acceptor role is filled by Glu430. Residues Ser793–Glu843 form a disordered region. Phosphoserine is present on residues Ser806, Ser827, and Ser868. Residues Ser806–Ser820 show a composition bias toward low complexity.

Belongs to the ribonucleoside diphosphate reductase large chain family. In terms of assembly, heterotetramer of two large (R1) and two small (R2) subunits. S.cerevisiae has two different R1 subunits (RNR1 and RNR3) and two different R2 subunits (RNR2 and RNR4). The functional form of the small subunits is a RNR2-RNR4 heterodimer, where RNR2 provides the iron-radical center and RNR4 is required for proper folding of RNR2 and assembly with the large subunits. Under normal growth conditions, the active form of the large subunits is a homodimer of the constitutively expressed RNR1. In damaged cells or cells arrested for DNA synthesis, the reductase consists of multiple species because of the association of the small subunits (RNR2-RNR4) with either the RNR1 homodimer or a heterodimer of RNR1 and the damage-inducible RNR3.

It is found in the cytoplasm. It carries out the reaction a 2'-deoxyribonucleoside 5'-diphosphate + [thioredoxin]-disulfide + H2O = a ribonucleoside 5'-diphosphate + [thioredoxin]-dithiol. With respect to regulation, under complex allosteric control mediated by deoxynucleoside triphosphates and ATP binding to separate specificity and activation sites on the large subunit. The type of nucleotide bound at the specificity site determines substrate preference. It seems probable that ATP makes the enzyme reduce CDP and UDP, dGTP favors ADP reduction and dTTP favors GDP reduction. Stimulated by ATP and inhibited by dATP binding to the activity site. In terms of biological role, provides the precursors necessary for DNA synthesis. Catalyzes the biosynthesis of deoxyribonucleotides from the corresponding ribonucleotides. In Saccharomyces cerevisiae (strain ATCC 204508 / S288c) (Baker's yeast), this protein is Ribonucleoside-diphosphate reductase large chain 2 (RNR3).